We begin with the raw amino-acid sequence, 78 residues long: MGGGNAQKSAMARAKNLEKAKAAGKGSQLEANKKAMSIQCKVCMQTFICTTSEVKCREHAEAKHPKADVVACFPHLKK.

The tract at residues M1–Q28 is disordered.

This is an uncharacterized protein from Arabidopsis thaliana (Mouse-ear cress).